The primary structure comprises 217 residues: Adenylate kinase (217 aa).

10 to 15 serves as a coordination point for ATP; that stretch reads GIGKGT. The segment at 30-59 is NMP; that stretch reads ATGDIFRKNFQENTPLGKESKKFINKGLLV. AMP contacts are provided by residues Thr31, Arg36, 57-59, 85-88, and Gln92; these read LLV and GFPR. Residues 126–163 form an LID region; that stretch reads GRRICSHCGKVYHLDNLPPKIEGICDKDQKKLIQREDD. Residue Arg127 participates in ATP binding. Residues Cys130 and Cys133 each contribute to the Zn(2+) site. 136–137 provides a ligand contact to ATP; it reads VY. Positions 150 and 153 each coordinate Zn(2+). AMP is bound by residues Arg160 and Arg171. Gln199 serves as a coordination point for ATP.

This sequence belongs to the adenylate kinase family. In terms of assembly, monomer.

It is found in the cytoplasm. It catalyses the reaction AMP + ATP = 2 ADP. Its pathway is purine metabolism; AMP biosynthesis via salvage pathway; AMP from ADP: step 1/1. Catalyzes the reversible transfer of the terminal phosphate group between ATP and AMP. Plays an important role in cellular energy homeostasis and in adenine nucleotide metabolism. This chain is Adenylate kinase, found in Phytoplasma australiense.